The primary structure comprises 296 residues: MRNETLTLSSPAKLNLFLHITGRRPDGYHELQTLFQLLDYGDSLSFTPRDDQRITLEPSLPGVPEADNLIIKAARLLKEHITATSPDKAGQISGVSIYINKKLPMGGGIGGGSSNAATTLLALNRLWNADINTETLAALGLKLGADVPVFVRGATAFAEGVGDILHPVDTQEKWYLVVHPNLHISTAKIFSDKWLTRDTPKSTIAPALEGDLENLRNDCETVVCRMYPEIREAINWLDQFSPARLTGTGACIFASFSDKKRAEYVLSQMPTKYQGFVAKSINESPVLNELKQWRNH.

Lys-13 is an active-site residue. 104–114 is a binding site for ATP; it reads PMGGGIGGGSS. The active site involves Asp-146.

Belongs to the GHMP kinase family. IspE subfamily.

The enzyme catalyses 4-CDP-2-C-methyl-D-erythritol + ATP = 4-CDP-2-C-methyl-D-erythritol 2-phosphate + ADP + H(+). It functions in the pathway isoprenoid biosynthesis; isopentenyl diphosphate biosynthesis via DXP pathway; isopentenyl diphosphate from 1-deoxy-D-xylulose 5-phosphate: step 3/6. Catalyzes the phosphorylation of the position 2 hydroxy group of 4-diphosphocytidyl-2C-methyl-D-erythritol. This is 4-diphosphocytidyl-2-C-methyl-D-erythritol kinase from Hahella chejuensis (strain KCTC 2396).